The sequence spans 71 residues: Sec-independent protein translocase protein TatA (71 aa).

A helical membrane pass occupies residues 1–21; that stretch reads MGSFSMGHWLIVLAIIVLLFG. The segment covering 41–57 has biased composition (basic and acidic residues); that stretch reads KEMEDETPVEKIEKADS. Residues 41-71 are disordered; sequence KEMEDETPVEKIEKADSETQSTKQNETTKNV. Over residues 58-71 the composition is skewed to polar residues; sequence ETQSTKQNETTKNV.

This sequence belongs to the TatA/E family. As to quaternary structure, the Tat system comprises two distinct complexes: a TatABC complex, containing multiple copies of TatA, TatB and TatC subunits, and a separate TatA complex, containing only TatA subunits. Substrates initially bind to the TatABC complex, which probably triggers association of the separate TatA complex to form the active translocon.

The protein localises to the cell inner membrane. In terms of biological role, part of the twin-arginine translocation (Tat) system that transports large folded proteins containing a characteristic twin-arginine motif in their signal peptide across membranes. TatA could form the protein-conducting channel of the Tat system. The protein is Sec-independent protein translocase protein TatA of Campylobacter fetus subsp. fetus (strain 82-40).